Here is a 167-residue protein sequence, read N- to C-terminus: MNYYNVGKIIATHGLKGEVKVALTTDFPEDRFRAGSRLYLGDDSREVTVAAGRPFKQFWLVTFAEITDIDQAEKLKGTEILISEEDQGELPDGVYYYRELLGCKVLDDESGEEIGELTDIEAPGANDIWEVTDKNGKSFWLPYIPQVVKSVDIDKKEVRVELMEGLR.

The PRC barrel domain occupies 92–166 (DGVYYYRELL…EVRVELMEGL (75 aa)).

It belongs to the RimM family. As to quaternary structure, binds ribosomal protein uS19.

The protein localises to the cytoplasm. Its function is as follows. An accessory protein needed during the final step in the assembly of 30S ribosomal subunit, possibly for assembly of the head region. Essential for efficient processing of 16S rRNA. May be needed both before and after RbfA during the maturation of 16S rRNA. It has affinity for free ribosomal 30S subunits but not for 70S ribosomes. This Lactobacillus delbrueckii subsp. bulgaricus (strain ATCC 11842 / DSM 20081 / BCRC 10696 / JCM 1002 / NBRC 13953 / NCIMB 11778 / NCTC 12712 / WDCM 00102 / Lb 14) protein is Ribosome maturation factor RimM.